The chain runs to 256 residues: Putative ankyrin repeat protein PAE1861 (256 aa).

ANK repeat units lie at residues 1 to 30 (MDCNNLLNAARRGEAELLTRLLNEGCSPDV), 34 to 63 (YGRTPLYYAAERGDVGTVDLLIKAGADPNA), 67 to 92 (EGKTPIIIATQSRKFGVIPLLSASAV), 93 to 122 (GVEEALYTAARNGCHKAVRYMLARGVRPGA), 124 to 151 (HGESLLHLVAGDAGLVKLLLEYGVDPNA), 155 to 184 (HGKTPLHMASEHNCAQCVELLLKRGPDVNV), 188 to 214 (AGRTPLHYADDVDCIKLLLRYGADLNA), and 218 to 245 (MGRTPLHYAEDGLAAEALLKRGARPVPD).

The sequence is that of Putative ankyrin repeat protein PAE1861 from Pyrobaculum aerophilum (strain ATCC 51768 / DSM 7523 / JCM 9630 / CIP 104966 / NBRC 100827 / IM2).